A 325-amino-acid polypeptide reads, in one-letter code: Heat-inducible transcription repressor HrcA (325 aa).

Belongs to the HrcA family.

Its function is as follows. Negative regulator of class I heat shock genes (grpE-dnaK-dnaJ and groELS operons). Prevents heat-shock induction of these operons. The chain is Heat-inducible transcription repressor HrcA from Staphylococcus haemolyticus (strain JCSC1435).